Here is a 232-residue protein sequence, read N- to C-terminus: Probable phospholipid hydroperoxide glutathione peroxidase 6, mitochondrial (232 aa).

Residues M1–G54 constitute a mitochondrion transit peptide. The active site involves C105.

It belongs to the glutathione peroxidase family. As to expression, expressed at a low but detectable level in leaves, stems, and flowers, but at a higher level in siliques and even higher in roots. Predominantly expressed in seeds.

The protein resides in the mitochondrion. It carries out the reaction a hydroperoxy polyunsaturated fatty acid + 2 glutathione = a hydroxy polyunsaturated fatty acid + glutathione disulfide + H2O. Functionally, protects cells and enzymes from oxidative damage, by catalyzing the reduction of hydrogen peroxide, lipid peroxides and organic hydroperoxide, by glutathione. This Arabidopsis thaliana (Mouse-ear cress) protein is Probable phospholipid hydroperoxide glutathione peroxidase 6, mitochondrial (GPX6).